We begin with the raw amino-acid sequence, 82 residues long: Small ribosomal subunit protein uS17 (82 aa).

Belongs to the universal ribosomal protein uS17 family. In terms of assembly, part of the 30S ribosomal subunit.

In terms of biological role, one of the primary rRNA binding proteins, it binds specifically to the 5'-end of 16S ribosomal RNA. The protein is Small ribosomal subunit protein uS17 of Rhodopseudomonas palustris (strain BisA53).